We begin with the raw amino-acid sequence, 482 residues long: Serine carboxypeptidase-like 36 (482 aa).

Residues 1-25 (MGKRQDWSVTACIFLFLSLASQIHC) form the signal peptide. Intrachain disulfides connect Cys119-Cys363, Cys275-Cys286, and Cys310-Cys331. The active site involves Ser210. The N-linked (GlcNAc...) asparagine glycan is linked to Asn228. N-linked (GlcNAc...) asparagine glycans are attached at residues Asn312 and Asn352. Residue Asp402 is part of the active site. Asn418 and Asn444 each carry an N-linked (GlcNAc...) asparagine glycan. Residue His455 is part of the active site.

This sequence belongs to the peptidase S10 family. Expressed in seedlings, flowers and siliques.

It is found in the secreted. In terms of biological role, probable carboxypeptidase. The protein is Serine carboxypeptidase-like 36 (SCPL36) of Arabidopsis thaliana (Mouse-ear cress).